The chain runs to 133 residues: Putative biopolymer transport protein ExbD-like 1 (133 aa).

Residues 1-15 lie on the Cytoplasmic side of the membrane; that stretch reads MNYDNYWDEDKPELN. Residues 16–32 traverse the membrane as a helical segment; the sequence is ITPLVDVMLVLLAILMV. Residues 33-133 lie on the Periplasmic side of the membrane; the sequence is TTPTLTYKEE…FLKVSLITSP (101 aa).

The protein belongs to the ExbD/TolR family.

Its subcellular location is the cell inner membrane. The polypeptide is Putative biopolymer transport protein ExbD-like 1 (Helicobacter pylori (strain J99 / ATCC 700824) (Campylobacter pylori J99)).